Reading from the N-terminus, the 43-residue chain is Kappa-actitoxin-Avd4p (43 aa).

3 disulfide bridges follow: cysteine 4–cysteine 39, cysteine 6–cysteine 32, and cysteine 22–cysteine 40.

Its subcellular location is the secreted. It localises to the nematocyst. In terms of biological role, blocks Kv3 voltage-gated potassium channels. Reduces blood pressure. The sequence is that of Kappa-actitoxin-Avd4p from Anemonia viridis (Snakelocks anemone).